We begin with the raw amino-acid sequence, 207 residues long: Holliday junction branch migration complex subunit RuvA (207 aa).

Residues 1 to 64 form a domain I region; that stretch reads MIGRLRGNLL…EDAQLLYGFN (64 aa). Residues 65–143 form a domain II region; the sequence is TKNERALFRE…GWGAGDLFTP (79 aa). The segment at 144-158 is flexible linker; that stretch reads ATDAAPMDDGSEFIT. The segment at 159–207 is domain III; the sequence is SPQSAVDEAVSALIALGYKPQQASKTVSQIAKPDMTSEVLIRESLKSMI.

The protein belongs to the RuvA family. As to quaternary structure, homotetramer. Forms an RuvA(8)-RuvB(12)-Holliday junction (HJ) complex. HJ DNA is sandwiched between 2 RuvA tetramers; dsDNA enters through RuvA and exits via RuvB. An RuvB hexamer assembles on each DNA strand where it exits the tetramer. Each RuvB hexamer is contacted by two RuvA subunits (via domain III) on 2 adjacent RuvB subunits; this complex drives branch migration. In the full resolvosome a probable DNA-RuvA(4)-RuvB(12)-RuvC(2) complex forms which resolves the HJ.

It localises to the cytoplasm. Its function is as follows. The RuvA-RuvB-RuvC complex processes Holliday junction (HJ) DNA during genetic recombination and DNA repair, while the RuvA-RuvB complex plays an important role in the rescue of blocked DNA replication forks via replication fork reversal (RFR). RuvA specifically binds to HJ cruciform DNA, conferring on it an open structure. The RuvB hexamer acts as an ATP-dependent pump, pulling dsDNA into and through the RuvAB complex. HJ branch migration allows RuvC to scan DNA until it finds its consensus sequence, where it cleaves and resolves the cruciform DNA. The sequence is that of Holliday junction branch migration complex subunit RuvA from Aliivibrio fischeri (strain ATCC 700601 / ES114) (Vibrio fischeri).